The chain runs to 458 residues: tRNA modification GTPase MnmE (458 aa).

3 residues coordinate (6S)-5-formyl-5,6,7,8-tetrahydrofolate: R23, E87, and R126. The 157-residue stretch at 224–380 (GLSMVIVGKP…LKSKIKDLFF (157 aa)) folds into the TrmE-type G domain. N234 serves as a coordination point for K(+). GTP is bound by residues 234–239 (NVGKSS), 253–259 (TDIAGTT), and 278–281 (DTAG). S238 is a Mg(2+) binding site. The K(+) site is built by T253, I255, and T258. T259 is a Mg(2+) binding site. K458 contacts (6S)-5-formyl-5,6,7,8-tetrahydrofolate.

This sequence belongs to the TRAFAC class TrmE-Era-EngA-EngB-Septin-like GTPase superfamily. TrmE GTPase family. Homodimer. Heterotetramer of two MnmE and two MnmG subunits. Requires K(+) as cofactor.

It is found in the cytoplasm. In terms of biological role, exhibits a very high intrinsic GTPase hydrolysis rate. Involved in the addition of a carboxymethylaminomethyl (cmnm) group at the wobble position (U34) of certain tRNAs, forming tRNA-cmnm(5)s(2)U34. The sequence is that of tRNA modification GTPase MnmE from Clostridium perfringens (strain ATCC 13124 / DSM 756 / JCM 1290 / NCIMB 6125 / NCTC 8237 / Type A).